The following is a 695-amino-acid chain: Elongation factor G (695 aa).

One can recognise a tr-type G domain in the interval 10–289 (KNLRNIGIMA…AVVAWMPSPL (280 aa)). GTP is bound by residues 19–26 (AHIDAGKT), 83–87 (DTPGH), and 137–140 (NKMD).

Belongs to the TRAFAC class translation factor GTPase superfamily. Classic translation factor GTPase family. EF-G/EF-2 subfamily.

It is found in the cytoplasm. Its function is as follows. Catalyzes the GTP-dependent ribosomal translocation step during translation elongation. During this step, the ribosome changes from the pre-translocational (PRE) to the post-translocational (POST) state as the newly formed A-site-bound peptidyl-tRNA and P-site-bound deacylated tRNA move to the P and E sites, respectively. Catalyzes the coordinated movement of the two tRNA molecules, the mRNA and conformational changes in the ribosome. This Protochlamydia amoebophila (strain UWE25) protein is Elongation factor G.